Consider the following 333-residue polypeptide: ATP synthase subunit a (333 aa).

The first 32 residues, M1–A32, serve as a signal peptide directing secretion. A run of 7 helical transmembrane segments spans residues H100–N120, F161–V181, A185–T205, L229–L249, F254–F274, I279–F299, and L300–E320.

The protein belongs to the ATPase A chain family. As to quaternary structure, F-type ATPases have 2 components, CF(1) - the catalytic core - and CF(0) - the membrane proton channel. CF(1) has five subunits: alpha(3), beta(3), gamma(1), delta(1), epsilon(1). CF(0) has four main subunits: a, b, b' and c.

It localises to the cell inner membrane. Key component of the proton channel; it plays a direct role in the translocation of protons across the membrane. This Chloroherpeton thalassium (strain ATCC 35110 / GB-78) protein is ATP synthase subunit a.